The chain runs to 97 residues: Core protein A15 homolog (97 aa).

Belongs to the chordopoxvirinae A15 family. In terms of assembly, part of a complex composed of A30, G7, F10 kinase, A15, D2, D3, and J1.

Its subcellular location is the host cytoplasm. It is found in the virion. Late protein which is a part of a large complex required for early virion morphogenesis. This complex participates in the formation of virosomes and the incorporation of virosomal contents into nascent immature virions. A15 is required for the stability and kinase activity of F10. The polypeptide is Core protein A15 homolog (Vertebrata (FPV)).